Here is a 504-residue protein sequence, read N- to C-terminus: 2,3-bisphosphoglycerate-independent phosphoglycerate mutase (504 aa).

Residues Asp-9 and Ser-59 each coordinate Mn(2+). Ser-59 (phosphoserine intermediate) is an active-site residue. Residues His-120, 149 to 150 (RD), Arg-181, Arg-187, 253 to 256 (RPDR), and Lys-326 each bind substrate. The Mn(2+) site is built by Asp-393, His-397, Asp-434, His-435, and His-451.

It belongs to the BPG-independent phosphoglycerate mutase family. Mn(2+) is required as a cofactor.

It catalyses the reaction (2R)-2-phosphoglycerate = (2R)-3-phosphoglycerate. The protein operates within carbohydrate degradation; glycolysis; pyruvate from D-glyceraldehyde 3-phosphate: step 3/5. Catalyzes the interconversion of 2-phosphoglycerate and 3-phosphoglycerate. This is 2,3-bisphosphoglycerate-independent phosphoglycerate mutase from Haloquadratum walsbyi (strain DSM 16790 / HBSQ001).